We begin with the raw amino-acid sequence, 169 residues long: Lipoprotein signal peptidase (169 aa).

2 helical membrane-spanning segments follow: residues 56-76 and 84-104; these read FLPPGVLLILTTIIVSGVIIY and QPLFLGSFGLIAGGGIGNLID. Residues aspartate 113 and aspartate 139 contribute to the active site. Residues 132–152 form a helical membrane-spanning segment; the sequence is WPIFNIADSAITIGACMLIIF.

The protein belongs to the peptidase A8 family.

The protein resides in the cell inner membrane. It carries out the reaction Release of signal peptides from bacterial membrane prolipoproteins. Hydrolyzes -Xaa-Yaa-Zaa-|-(S,diacylglyceryl)Cys-, in which Xaa is hydrophobic (preferably Leu), and Yaa (Ala or Ser) and Zaa (Gly or Ala) have small, neutral side chains.. The protein operates within protein modification; lipoprotein biosynthesis (signal peptide cleavage). Its function is as follows. This protein specifically catalyzes the removal of signal peptides from prolipoproteins. The polypeptide is Lipoprotein signal peptidase (Chlorobium phaeovibrioides (strain DSM 265 / 1930) (Prosthecochloris vibrioformis (strain DSM 265))).